The following is a 501-amino-acid chain: Group 3 secretory phospholipase A2 (501 aa).

An N-terminal signal peptide occupies residues 1–19 (MGVLVVLLGVLSFLGRTLG). Positions 119-139 (RGPAESPAGTREKRAAGQNGV) are disordered. The interval 150–291 (GWTVPGTLWC…SWSSPATSLT (142 aa)) is phospholipase A2-like. Ca(2+)-binding residues include Trp-158, Gly-160, and Gly-162. 4 cysteine pairs are disulfide-bonded: Cys-159–Cys-181, Cys-180–Cys-220, Cys-187–Cys-213, and Cys-211–Cys-244. An N-linked (GlcNAc...) asparagine glycan is attached at Asn-167. His-184 is a catalytic residue. Ca(2+) is bound at residue Asp-185. Asp-214 is a catalytic residue. N-linked (GlcNAc...) asparagine glycosylation occurs at Asn-280. Residues 284-298 (SSPATSLTPSPQNPA) show a composition bias toward polar residues. The tract at residues 284–339 (SSPATSLTPSPQNPALSRPQPMQHPQQWPSEWKESKSPSKTNATALQAPVASPGSD) is disordered. 2 N-linked (GlcNAc...) asparagine glycosylation sites follow: Asn-325 and Asn-403.

This sequence belongs to the phospholipase A2 family. The cofactor is Ca(2+). In terms of processing, N-glycosylation does not affect the catalytic activity, but is required for proper secretion. A nonglycosylated form was observed in several cell types. In several cell types, the N- and C-termini are cleaved off.

It localises to the secreted. It is found in the cell membrane. Its subcellular location is the cytoplasm. The protein localises to the cytoskeleton. The protein resides in the microtubule organizing center. It localises to the centrosome. It is found in the centriole. Its subcellular location is the recycling endosome. The enzyme catalyses a 1,2-diacyl-sn-glycero-3-phosphocholine + H2O = a 1-acyl-sn-glycero-3-phosphocholine + a fatty acid + H(+). It carries out the reaction 1-hexadecanoyl-2-(9Z,12Z-octadecadienoyl)-sn-glycero-3-phosphocholine + H2O = (9Z,12Z)-octadecadienoate + 1-hexadecanoyl-sn-glycero-3-phosphocholine + H(+). The catalysed reaction is 1-hexadecanoyl-2-(5Z,8Z,11Z,14Z-eicosatetraenoyl)-sn-glycero-3-phosphocholine + H2O = 1-hexadecanoyl-sn-glycero-3-phosphocholine + (5Z,8Z,11Z,14Z)-eicosatetraenoate + H(+). It catalyses the reaction 1-hexadecanoyl-2-(9Z,12Z-octadecadienoyl)-sn-glycero-3-phosphoethanolamine + H2O = 1-hexadecanoyl-sn-glycero-3-phosphoethanolamine + (9Z,12Z)-octadecadienoate + H(+). The enzyme catalyses 1-hexadecanoyl-2-(5Z,8Z,11Z,14Z-eicosatetraenoyl)-sn-glycero-3-phosphoethanolamine + H2O = 1-hexadecanoyl-sn-glycero-3-phosphoethanolamine + (5Z,8Z,11Z,14Z)-eicosatetraenoate + H(+). In terms of biological role, secretory calcium-dependent phospholipase A2 that primarily targets extracellular phospholipids. Hydrolyzes the ester bond of the fatty acyl group attached at sn-2 position of phospholipids without apparent head group selectivity. Contributes to phospholipid remodeling of low-density lipoprotein (LDL) and high-density lipoprotein (HDL) particles. Hydrolyzes LDL phospholipids releasing unsaturated fatty acids that regulate macrophage differentiation toward foam cells. May act in an autocrine and paracrine manner. Secreted by immature mast cells, acts on nearby fibroblasts upstream to PTDGS to synthesize prostaglandin D2 (PGD2), which in turn promotes mast cell maturation and degranulation via PTGDR. Secreted by epididymal epithelium, acts on immature sperm cells within the duct, modulating the degree of unsaturation of the fatty acyl components of phosphatidylcholines required for acrosome assembly and sperm cell motility. Facilitates the replacement of fatty acyl chains in phosphatidylcholines in sperm membranes from omega-6 and omega-9 to omega-3 polyunsaturated fatty acids (PUFAs). Coupled to lipoxygenase pathway, may process omega-6 PUFAs to generate oxygenated lipid mediators in the male reproductive tract. At pericentrosomal preciliary compartment, negatively regulates ciliogenesis likely by regulating endocytotic recycling of ciliary membrane protein. Coupled to cyclooxygenase pathway provides arachidonate to generate prostaglandin E2 (PGE2), a potent immunomodulatory lipid in inflammation and tumorigenesis. At colonic epithelial barrier, preferentially hydrolyzes phospholipids having arachidonate and docosahexaenoate at sn-2 position, contributing to the generation of oxygenated metabolites involved in colonic stem cell homeostasis. Releases C16:0 and C18:0 lysophosphatidylcholine subclasses from neuron plasma membranes and promotes neurite outgrowth and neuron survival. The protein is Group 3 secretory phospholipase A2 (PLA2G3) of Bos taurus (Bovine).